The primary structure comprises 118 residues: Small ribosomal subunit protein uS13 (118 aa).

The interval 94–118 (NLPVRGQNTKNNARTRKGPIRSIKR) is disordered. Residues 106-118 (ARTRKGPIRSIKR) show a composition bias toward basic residues.

This sequence belongs to the universal ribosomal protein uS13 family. In terms of assembly, part of the 30S ribosomal subunit. Forms a loose heterodimer with protein S19. Forms two bridges to the 50S subunit in the 70S ribosome.

Its function is as follows. Located at the top of the head of the 30S subunit, it contacts several helices of the 16S rRNA. In the 70S ribosome it contacts the 23S rRNA (bridge B1a) and protein L5 of the 50S subunit (bridge B1b), connecting the 2 subunits; these bridges are implicated in subunit movement. Contacts the tRNAs in the A and P-sites. This chain is Small ribosomal subunit protein uS13, found in Psychrobacter sp. (strain PRwf-1).